A 226-amino-acid chain; its full sequence is V-type proton ATPase subunit E (226 aa).

The protein belongs to the V-ATPase E subunit family. V-ATPase is a heteromultimeric enzyme made up of two complexes: the ATP-hydrolytic V1 complex and the proton translocation V0 complex. The V1 complex consists of three catalytic AB heterodimers that form a heterohexamer, three peripheral stalks each consisting of EG heterodimers, one central rotor including subunits D and F, and the regulatory subunits C and H. The proton translocation complex V0 consists of the proton transport subunit a, a ring of proteolipid subunits c9c'', rotary subunit d, subunits e and f, and the accessory subunits VhaAC45 and ATP6AP2.

In terms of biological role, subunit of the V1 complex of vacuolar(H+)-ATPase (V-ATPase), a multisubunit enzyme composed of a peripheral complex (V1) that hydrolyzes ATP and a membrane integral complex (V0) that translocates protons. V-ATPase is responsible for acidifying and maintaining the pH of intracellular compartments and in some cell types, is targeted to the plasma membrane, where it is responsible for acidifying the extracellular environment. This chain is V-type proton ATPase subunit E (VHA26), found in Manduca sexta (Tobacco hawkmoth).